Consider the following 571-residue polypeptide: Acetolactate synthase large subunit (571 aa).

Glu51 serves as a coordination point for thiamine diphosphate. FAD is bound by residues Arg153, 261 to 282 (HGTYEANMTMHHADVIFAIGVR), and 304 to 323 (DIDPTSISKTVSANIPIVGD). The thiamine pyrophosphate binding stretch occupies residues 394-474 (QHQMFTALYY…VLILNLNNSS (81 aa)). Mg(2+)-binding residues include Asp445 and Asn472.

This sequence belongs to the TPP enzyme family. As to quaternary structure, dimer of large and small chains. Mg(2+) is required as a cofactor. Requires thiamine diphosphate as cofactor.

It carries out the reaction 2 pyruvate + H(+) = (2S)-2-acetolactate + CO2. It participates in amino-acid biosynthesis; L-isoleucine biosynthesis; L-isoleucine from 2-oxobutanoate: step 1/4. The protein operates within amino-acid biosynthesis; L-valine biosynthesis; L-valine from pyruvate: step 1/4. This is Acetolactate synthase large subunit (ilvI) from Buchnera aphidicola subsp. Acyrthosiphon pisum (strain APS) (Acyrthosiphon pisum symbiotic bacterium).